Reading from the N-terminus, the 156-residue chain is Ribonuclease pancreatic (156 aa).

A signal peptide spans 1 to 26 (MGLEKSLVFFPLLVLLALGWVQPCLG). Residues Lys33 and Arg36 each coordinate substrate. His38 (proton acceptor) is an active-site residue. Cystine bridges form between Cys54–Cys112, Cys68–Cys123, Cys86–Cys138, and Cys93–Cys100. Position 69-73 (69-73 (KPVNT)) interacts with substrate. N-linked (GlcNAc...) asparagine glycosylation is present at Asn90. Substrate-binding residues include Lys94 and Arg113. His147 serves as the catalytic Proton donor.

It belongs to the pancreatic ribonuclease family. Monomer. Interacts with and forms tight 1:1 complexes with RNH1. Dimerization of two such complexes may occur. Interaction with RNH1 inhibits this protein. As to expression, pancreas.

Its subcellular location is the secreted. The enzyme catalyses an [RNA] containing cytidine + H2O = an [RNA]-3'-cytidine-3'-phosphate + a 5'-hydroxy-ribonucleotide-3'-[RNA].. It carries out the reaction an [RNA] containing uridine + H2O = an [RNA]-3'-uridine-3'-phosphate + a 5'-hydroxy-ribonucleotide-3'-[RNA].. Endonuclease that catalyzes the cleavage of RNA on the 3' side of pyrimidine nucleotides. Acts on single-stranded and double-stranded RNA. In Glis glis (Fat dormouse), this protein is Ribonuclease pancreatic (RNASE1).